An 872-amino-acid chain; its full sequence is Alanine--tRNA ligase (872 aa).

Positions 567, 571, 669, and 673 each coordinate Zn(2+).

The protein belongs to the class-II aminoacyl-tRNA synthetase family. The cofactor is Zn(2+).

It localises to the cytoplasm. The catalysed reaction is tRNA(Ala) + L-alanine + ATP = L-alanyl-tRNA(Ala) + AMP + diphosphate. Functionally, catalyzes the attachment of alanine to tRNA(Ala) in a two-step reaction: alanine is first activated by ATP to form Ala-AMP and then transferred to the acceptor end of tRNA(Ala). Also edits incorrectly charged Ser-tRNA(Ala) and Gly-tRNA(Ala) via its editing domain. In Streptococcus pneumoniae serotype 2 (strain D39 / NCTC 7466), this protein is Alanine--tRNA ligase.